We begin with the raw amino-acid sequence, 352 residues long: tRNA pseudouridine synthase D (352 aa).

Catalysis depends on aspartate 81, which acts as the Nucleophile. The 147-residue stretch at 157-303 folds into the TRUD domain; the sequence is GVPNYFGTQR…MDHERRILRL (147 aa).

It belongs to the pseudouridine synthase TruD family.

The catalysed reaction is uridine(13) in tRNA = pseudouridine(13) in tRNA. Its function is as follows. Responsible for synthesis of pseudouridine from uracil-13 in transfer RNAs. The chain is tRNA pseudouridine synthase D from Pseudomonas putida (strain ATCC 47054 / DSM 6125 / CFBP 8728 / NCIMB 11950 / KT2440).